A 54-amino-acid chain; its full sequence is UPF0391 membrane protein RC1_1636 (54 aa).

The next 2 helical transmembrane spans lie at 3 to 23 and 30 to 50; these read YWAL…FGGI and IAQI…IMGL.

This sequence belongs to the UPF0391 family.

The protein localises to the cell membrane. This Rhodospirillum centenum (strain ATCC 51521 / SW) protein is UPF0391 membrane protein RC1_1636.